The following is a 301-amino-acid chain: Putative S-adenosyl-L-methionine-dependent methyltransferase MT0851 (301 aa).

Residues Asp-127 and 156–157 (DL) each bind S-adenosyl-L-methionine.

This sequence belongs to the UPF0677 family.

In terms of biological role, exhibits S-adenosyl-L-methionine-dependent methyltransferase activity. In Mycobacterium tuberculosis (strain CDC 1551 / Oshkosh), this protein is Putative S-adenosyl-L-methionine-dependent methyltransferase MT0851.